The chain runs to 739 residues: Phosphoribosylformylglycinamidine synthase subunit PurL (739 aa).

Residue His-53 is part of the active site. ATP is bound by residues Tyr-56 and Lys-95. Glu-97 is a Mg(2+) binding site. Substrate contacts are provided by residues 98–101 (SHNH) and Arg-120. The active-site Proton acceptor is His-99. Residue Asp-121 coordinates Mg(2+). Gln-244 serves as a coordination point for substrate. Asp-274 is a binding site for Mg(2+). 318–320 (ESQ) serves as a coordination point for substrate. The ATP site is built by Asp-501 and Gly-538. Asn-539 contributes to the Mg(2+) binding site. Ser-541 lines the substrate pocket.

The protein belongs to the FGAMS family. In terms of assembly, monomer. Part of the FGAM synthase complex composed of 1 PurL, 1 PurQ and 2 PurS subunits.

It is found in the cytoplasm. It catalyses the reaction N(2)-formyl-N(1)-(5-phospho-beta-D-ribosyl)glycinamide + L-glutamine + ATP + H2O = 2-formamido-N(1)-(5-O-phospho-beta-D-ribosyl)acetamidine + L-glutamate + ADP + phosphate + H(+). Its pathway is purine metabolism; IMP biosynthesis via de novo pathway; 5-amino-1-(5-phospho-D-ribosyl)imidazole from N(2)-formyl-N(1)-(5-phospho-D-ribosyl)glycinamide: step 1/2. Functionally, part of the phosphoribosylformylglycinamidine synthase complex involved in the purines biosynthetic pathway. Catalyzes the ATP-dependent conversion of formylglycinamide ribonucleotide (FGAR) and glutamine to yield formylglycinamidine ribonucleotide (FGAM) and glutamate. The FGAM synthase complex is composed of three subunits. PurQ produces an ammonia molecule by converting glutamine to glutamate. PurL transfers the ammonia molecule to FGAR to form FGAM in an ATP-dependent manner. PurS interacts with PurQ and PurL and is thought to assist in the transfer of the ammonia molecule from PurQ to PurL. This chain is Phosphoribosylformylglycinamidine synthase subunit PurL, found in Listeria innocua serovar 6a (strain ATCC BAA-680 / CLIP 11262).